The sequence spans 302 residues: Stanniocalcin-2 (302 aa).

Positions 1–24 (MCAERLGQFMTLALVLATFDPARG) are cleaved as a signal peptide. The interval 23–44 (RGTDATNPPEGPQDRSSQQKGR) is disordered. Asparagine 73 carries an N-linked (GlcNAc...) asparagine glycan. Residues 217 to 302 (KPPTAPPERQ…EQSEYSDIRR (86 aa)) are disordered. The segment covering 227–264 (PQVDRTKLSRAHHGEAGHHLPEPSSRETGRGAKGERGS) has biased composition (basic and acidic residues). A phosphoserine; by FAM20C mark is found at serine 250 and serine 251. The residue at position 254 (threonine 254) is a Phosphothreonine; by FAM20C.

This sequence belongs to the stanniocalcin family. Homodimer; disulfide-linked. As to expression, expressed in a variety of tissues including muscle, heart, pancreas, kidney, spleen, prostate, small intestine, colon and peripheral blood leukocytes.

The protein localises to the secreted. In terms of biological role, has an anti-hypocalcemic action on calcium and phosphate homeostasis. The polypeptide is Stanniocalcin-2 (STC2) (Homo sapiens (Human)).